A 148-amino-acid chain; its full sequence is Lysozyme C (148 aa).

An N-terminal signal peptide occupies residues 1 to 18; the sequence is MKALIVLGLVLLSVMVQG. In terms of domain architecture, C-type lysozyme spans 19 to 148; sequence KVFERCELAR…VRQYVQGCGV (130 aa). Disulfide bonds link C24-C146, C48-C134, C83-C99, and C95-C113. Residues E53 and D71 contribute to the active site.

This sequence belongs to the glycosyl hydrolase 22 family. As to quaternary structure, monomer.

It carries out the reaction Hydrolysis of (1-&gt;4)-beta-linkages between N-acetylmuramic acid and N-acetyl-D-glucosamine residues in a peptidoglycan and between N-acetyl-D-glucosamine residues in chitodextrins.. Lysozymes have primarily a bacteriolytic function; those in tissues and body fluids are associated with the monocyte-macrophage system and enhance the activity of immunoagents. In Gorilla gorilla gorilla (Western lowland gorilla), this protein is Lysozyme C (LYZ).